A 467-amino-acid chain; its full sequence is Putative pentatricopeptide repeat-containing protein At1g10330 (467 aa).

10 PPR repeats span residues 50 to 84 (TKCV…HVQP), 85 to 119 (NNLT…GFLW), 120 to 150 (DPFV…ILNP), 151 to 181 (CVVA…MPVT), 182 to 216 (DVVS…ERAV), 220 to 256 (NEAT…EIIL), 257 to 287 (TTTL…IRDK), 288 to 322 (KVCA…YVHP), 323 to 358 (NGIT…KIIP), and 359 to 389 (TSEH…LPFE). The interval 394–467 (VLGALLGACK…RKIPAYSVLT (74 aa)) is type E motif; degenerate.

Belongs to the PPR family. PCMP-E subfamily.

In Arabidopsis thaliana (Mouse-ear cress), this protein is Putative pentatricopeptide repeat-containing protein At1g10330 (PCMP-E71).